The following is a 469-amino-acid chain: Endoplasmic reticulum oxidoreductin-1 (469 aa).

An N-terminal signal peptide occupies residues 1–36; sequence MGKGAIKEEESEKKRKTWRWPLATLVVVFLAVAVSS. 6 cysteine pairs are disulfide-bonded: Cys-52–Cys-71, Cys-54–Cys-69, Cys-108–Cys-372, Cys-117–Cys-122, Cys-222–Cys-231, and Cys-375–Cys-378. Positions 201, 203, and 214 each coordinate FAD. Residues Ser-242, His-245, Arg-275, and Arg-282 each coordinate FAD. N-linked (GlcNAc...) asparagine glycosylation is present at Asn-365.

It belongs to the EROs family. May function both as a monomer and a homodimer. The cofactor is FAD. In terms of processing, N-glycosylated.

The protein localises to the endoplasmic reticulum membrane. In terms of biological role, essential oxidoreductase that oxidizes proteins in the endoplasmic reticulum to produce disulfide bonds. Acts by oxidizing directly PDI isomerase through a direct disulfide exchange. Does not act as a direct oxidant of folding substrate, but relies on PDI to transfer oxidizing equivalent. Does not oxidize all PDI related proteins, suggesting that it can discriminate between PDI and related proteins. Its reoxidation probably involves electron transfer to molecular oxygen via FAD. Acts independently of glutathione. May be responsible for a significant proportion of reactive oxygen species (ROS) in the cell, thereby being a source of oxidative stress. This is Endoplasmic reticulum oxidoreductin-1 (AERO1) from Arabidopsis thaliana (Mouse-ear cress).